The primary structure comprises 226 residues: 2-C-methyl-D-erythritol 4-phosphate cytidylyltransferase (226 aa).

The protein belongs to the IspD/TarI cytidylyltransferase family. IspD subfamily.

It carries out the reaction 2-C-methyl-D-erythritol 4-phosphate + CTP + H(+) = 4-CDP-2-C-methyl-D-erythritol + diphosphate. The protein operates within isoprenoid biosynthesis; isopentenyl diphosphate biosynthesis via DXP pathway; isopentenyl diphosphate from 1-deoxy-D-xylulose 5-phosphate: step 2/6. Functionally, catalyzes the formation of 4-diphosphocytidyl-2-C-methyl-D-erythritol from CTP and 2-C-methyl-D-erythritol 4-phosphate (MEP). The chain is 2-C-methyl-D-erythritol 4-phosphate cytidylyltransferase from Rhodococcus opacus (strain B4).